A 332-amino-acid polypeptide reads, in one-letter code: Ribosomal RNA small subunit methyltransferase H (332 aa).

S-adenosyl-L-methionine-binding positions include 39 to 41 (GGY), D56, F83, D100, and Q107.

It belongs to the methyltransferase superfamily. RsmH family.

Its subcellular location is the cytoplasm. The catalysed reaction is cytidine(1402) in 16S rRNA + S-adenosyl-L-methionine = N(4)-methylcytidine(1402) in 16S rRNA + S-adenosyl-L-homocysteine + H(+). Its function is as follows. Specifically methylates the N4 position of cytidine in position 1402 (C1402) of 16S rRNA. The chain is Ribosomal RNA small subunit methyltransferase H from Bartonella grahamii (strain as4aup).